The primary structure comprises 185 residues: Cuticle protein 18.6, isoform A (185 aa).

7 repeat units span residues 21–24, 33–36, 41–44, 54–57, 133–136, 139–142, and 150–153. The 71-residue stretch at 64–134 folds into the Chitin-binding type R&amp;R domain; sequence HPQYSFAYNV…KEAGAHPAAA (71 aa).

In terms of biological role, component of the cuticle of migratory locust which contains more than 100 different structural proteins. The sequence is that of Cuticle protein 18.6, isoform A from Locusta migratoria (Migratory locust).